We begin with the raw amino-acid sequence, 177 residues long: Centromere protein R (177 aa).

Lysine 8 is covalently cross-linked (Glycyl lysine isopeptide (Lys-Gly) (interchain with G-Cter in SUMO2)). The LXXLL motif motif lies at 9-13; it reads LDGLL. Serine 17 bears the Phosphoserine mark. Positions 20–50 are DD1; the sequence is PSKITRKKSVITYSPTTGTCQMSLFASPTSS. Lysine 22 is covalently cross-linked (Glycyl lysine isopeptide (Lys-Gly) (interchain with G-Cter in SUMO2)). Position 28 is a phosphoserine (serine 28). Over residues 41–50 the composition is skewed to polar residues; it reads MSLFASPTSS. A disordered region spans residues 41-81; sequence MSLFASPTSSEEQKHRNGLSNEKRKKLNHPSLTESKESTTK. A Nuclear localization signal motif is present at residues 63 to 66; it reads KRKK. Residue serine 71 is modified to Phosphoserine. A coiled-coil region spans residues 83-113; the sequence is NDEFMMLLSKVEKLSEEIMEIMQNLSSIQAL. Positions 172 to 176 match the LXXIL motif motif; it reads LKAIL.

In terms of assembly, homodimer; mediated by the coiled coil domain. Isoform 3, but not other isoforms, interacts with the cytoplasmic tail of integrin ITGB3. The relevance of the interaction with ITGB3 is however uncertain, since isoform 3 is mainly nuclear. Interacts with CCNA2 and MTA1. Interacts with NFKB1 NF-kappa-B subunit. Component of the CENPA-CAD complex, composed of CENPI, CENPK, CENPL, CENPO, CENPP, CENPQ, CENPR and CENPS. The CENPA-CAD complex interacts with the CENPA-NAC complex, at least composed of CENPA, CENPC, CENPH, CENPM, CENPN, CENPT and CENPU. Interacts with TASOR. As to expression, widely expressed. Expressed in spleen, thymus, prostate, ovary, small intestine and white blood cells. Highly expressed in testis and colon. Isoform 4 is expressed in platelets, lymphocytes and granulocytes.

The protein resides in the nucleus. Its subcellular location is the chromosome. It is found in the centromere. It localises to the kinetochore. The protein localises to the cytoplasm. Transcription coregulator that can have both coactivator and corepressor functions. Isoform 1, but not other isoforms, is involved in the coactivation of nuclear receptors for retinoid X (RXRs) and thyroid hormone (TRs) in a ligand-dependent fashion. In contrast, it does not coactivate nuclear receptors for retinoic acid, vitamin D, progesterone receptor, nor glucocorticoid. Acts as a coactivator for estrogen receptor alpha. Acts as a transcriptional corepressor via its interaction with the NFKB1 NF-kappa-B subunit, possibly by interfering with the transactivation domain of NFKB1. Induces apoptosis in breast cancer cells, but not in other cancer cells, via a caspase-2 mediated pathway that involves mitochondrial membrane permeabilization but does not require other caspases. May also act as an inhibitor of cyclin A-associated kinase. Also acts a component of the CENPA-CAD (nucleosome distal) complex, a complex recruited to centromeres which is involved in assembly of kinetochore proteins, mitotic progression and chromosome segregation. May be involved in incorporation of newly synthesized CENPA into centromeres via its interaction with the CENPA-NAC complex. This Homo sapiens (Human) protein is Centromere protein R (ITGB3BP).